A 205-amino-acid chain; its full sequence is High frequency lysogenization protein HflD homolog (205 aa).

It belongs to the HflD family.

The protein resides in the cytoplasm. The protein localises to the cell inner membrane. In Shewanella oneidensis (strain ATCC 700550 / JCM 31522 / CIP 106686 / LMG 19005 / NCIMB 14063 / MR-1), this protein is High frequency lysogenization protein HflD homolog.